We begin with the raw amino-acid sequence, 519 residues long: Probable carboxypeptidase S-like 2 (519 aa).

A helical transmembrane segment spans residues 25–45; it reads FNLIKIIIRNLLIGILLMLVL. Histidine 151 is a Zn(2+) binding site. The active site involves aspartate 153. Residue aspartate 184 participates in Zn(2+) binding. Residue glutamate 218 is the Proton acceptor of the active site. Glutamate 219, aspartate 246, and histidine 490 together coordinate Zn(2+).

It belongs to the peptidase M20A family. It depends on Zn(2+) as a cofactor.

It localises to the membrane. This chain is Probable carboxypeptidase S-like 2, found in Dictyostelium discoideum (Social amoeba).